Reading from the N-terminus, the 146-residue chain is Nucleoside diphosphate kinase (146 aa).

The ATP site is built by Lys11, Phe59, Arg87, Thr93, Arg104, and Asn114. The active-site Pros-phosphohistidine intermediate is His117.

Belongs to the NDK family. In terms of assembly, homotetramer. Requires Mg(2+) as cofactor.

Its subcellular location is the cytoplasm. It carries out the reaction a 2'-deoxyribonucleoside 5'-diphosphate + ATP = a 2'-deoxyribonucleoside 5'-triphosphate + ADP. The enzyme catalyses a ribonucleoside 5'-diphosphate + ATP = a ribonucleoside 5'-triphosphate + ADP. Its function is as follows. Major role in the synthesis of nucleoside triphosphates other than ATP. The ATP gamma phosphate is transferred to the NDP beta phosphate via a ping-pong mechanism, using a phosphorylated active-site intermediate. This is Nucleoside diphosphate kinase from Anaplasma marginale (strain Florida).